Consider the following 79-residue polypeptide: MENLSMDLLYMAAAIMMGLAAIGAAIGIGILGGKFLEGAARQPDLIPLLRTQFFIVMGLVDAIPMIAVGLGLYVMFAVA.

The next 2 helical transmembrane spans lie at 11–31 (MAAAIMMGLAAIGAAIGIGIL) and 53–73 (FFIVMGLVDAIPMIAVGLGLY).

Belongs to the ATPase C chain family. As to quaternary structure, F-type ATPases have 2 components, F(1) - the catalytic core - and F(0) - the membrane proton channel. F(1) has five subunits: alpha(3), beta(3), gamma(1), delta(1), epsilon(1). F(0) has three main subunits: a(1), b(2) and c(10-14). The alpha and beta chains form an alternating ring which encloses part of the gamma chain. F(1) is attached to F(0) by a central stalk formed by the gamma and epsilon chains, while a peripheral stalk is formed by the delta and b chains.

Its subcellular location is the cell inner membrane. F(1)F(0) ATP synthase produces ATP from ADP in the presence of a proton or sodium gradient. F-type ATPases consist of two structural domains, F(1) containing the extramembraneous catalytic core and F(0) containing the membrane proton channel, linked together by a central stalk and a peripheral stalk. During catalysis, ATP synthesis in the catalytic domain of F(1) is coupled via a rotary mechanism of the central stalk subunits to proton translocation. In terms of biological role, key component of the F(0) channel; it plays a direct role in translocation across the membrane. A homomeric c-ring of between 10-14 subunits forms the central stalk rotor element with the F(1) delta and epsilon subunits. The sequence is that of ATP synthase subunit c from Proteus mirabilis (strain HI4320).